The sequence spans 595 residues: DNA primase (595 aa).

The CHC2-type zinc finger occupies 38–62 (CPFHDEKTPSFIVYPTRGHYHCYGC). In terms of domain architecture, Toprim spans 251–331 (RRVILVEGQA…GITAIVCRLP (81 aa)). Mg(2+) is bound by residues Glu257, Asp302, and Asp304. Residues 430 to 441 (KGKKVSAKEPSS) are compositionally biased toward basic and acidic residues. The tract at residues 430–451 (KGKKVSAKEPSSESKQTSTEGK) is disordered.

The protein belongs to the DnaG primase family. As to quaternary structure, monomer. Interacts with DnaB. The cofactor is Zn(2+). It depends on Mg(2+) as a cofactor.

The catalysed reaction is ssDNA + n NTP = ssDNA/pppN(pN)n-1 hybrid + (n-1) diphosphate.. RNA polymerase that catalyzes the synthesis of short RNA molecules used as primers for DNA polymerase during DNA replication. The sequence is that of DNA primase from Chlamydia trachomatis serovar D (strain ATCC VR-885 / DSM 19411 / UW-3/Cx).